The following is a 367-amino-acid chain: Lysophosphatidic acid receptor 5 (367 aa).

The Extracellular portion of the chain corresponds to 1–25 (MQANSSAKSLPTECPDYQPIHHLHL). N-linked (GlcNAc...) asparagine glycosylation occurs at Asn-4. Residues 26 to 46 (VVYSVVLAAGLPLNALALWVF) traverse the membrane as a helical segment. Residues 47–54 (LRALRVHS) are Cytoplasmic-facing. The helical transmembrane segment at 55 to 75 (VVSVYMCNLAASDLLFTLSLP) threads the bilayer. At 76–95 (LRLSYYARHYWPFPDFLCQL) the chain is on the extracellular side. An intrachain disulfide couples Cys-93 to Cys-174. Residues 96-116 (AGAVFQMNMYGSCIFLTLINV) traverse the membrane as a helical segment. The Cytoplasmic portion of the chain corresponds to 117–135 (DRYAAIVHPLRLRHLRRPR). A helical membrane pass occupies residues 136 to 156 (VARLLCLGVWALILVFAVPTI). Over 157 to 186 (LAHQPSSCARDGRNVSLCFESFSDKLWKGS) the chain is Extracellular. An N-linked (GlcNAc...) asparagine glycan is attached at Asn-170. A helical membrane pass occupies residues 187-207 (LLPLLLLAEALGFLLPLAAVV). The Cytoplasmic segment spans residues 208–238 (YSSGRVFWTLARPDATRSQRRRKTVRLLLAS). A helical membrane pass occupies residues 239 to 259 (LVIFLLCFVPYNATLAVYGLL). Residues 260 to 275 (RGEVVPASSEARKKVR) are Extracellular-facing. A helical transmembrane segment spans residues 276–296 (GVLMVMVLLAGANCVLDPLVY). The Cytoplasmic segment spans residues 297–367 (YFSAEGFRNT…FTPSHEDSSF (71 aa)). Low complexity predominate over residues 332 to 350 (LTETAHASTLTTTSQGQLQ). The disordered stretch occupies residues 332–367 (LTETAHASTLTTTSQGQLQPSDPRSSFTPSHEDSSF). Over residues 351-360 (PSDPRSSFTP) the composition is skewed to polar residues.

This sequence belongs to the G-protein coupled receptor 1 family.

The protein localises to the cell membrane. Receptor for lysophosphatidic acid (LPA), a mediator of diverse cellular activities. This is Lysophosphatidic acid receptor 5 (LPAR5) from Bos taurus (Bovine).